The chain runs to 280 residues: Phosphatidylglycerol--prolipoprotein diacylglyceryl transferase (280 aa).

2 consecutive transmembrane segments (helical) span residues 59-79 (FLTW…ILFY) and 97-117 (GGMS…LFTW). Arginine 142 contributes to the a 1,2-diacyl-sn-glycero-3-phospho-(1'-sn-glycerol) binding site. 2 helical membrane-spanning segments follow: residues 207–227 (GFLA…CECF) and 233–253 (FIGF…PMAI).

This sequence belongs to the Lgt family.

It localises to the cell inner membrane. It catalyses the reaction L-cysteinyl-[prolipoprotein] + a 1,2-diacyl-sn-glycero-3-phospho-(1'-sn-glycerol) = an S-1,2-diacyl-sn-glyceryl-L-cysteinyl-[prolipoprotein] + sn-glycerol 1-phosphate + H(+). Its pathway is protein modification; lipoprotein biosynthesis (diacylglyceryl transfer). Catalyzes the transfer of the diacylglyceryl group from phosphatidylglycerol to the sulfhydryl group of the N-terminal cysteine of a prolipoprotein, the first step in the formation of mature lipoproteins. In Gluconacetobacter diazotrophicus (strain ATCC 49037 / DSM 5601 / CCUG 37298 / CIP 103539 / LMG 7603 / PAl5), this protein is Phosphatidylglycerol--prolipoprotein diacylglyceryl transferase.